Reading from the N-terminus, the 864-residue chain is Putative Gly-rich membrane protein Bcell_0380 (864 aa).

The chain crosses the membrane as a helical span at residues 7–27 (ITFLAAFICIIFVIYAIYHSV). Positions 372–399 (TVENSFYDEDTTGQSDTGKGTPMSTADM) are disordered. A compositionally biased stretch (polar residues) spans 383–395 (TGQSDTGKGTPMS).

The protein resides in the cell membrane. This is Putative Gly-rich membrane protein Bcell_0380 from Evansella cellulosilytica (strain ATCC 21833 / DSM 2522 / FERM P-1141 / JCM 9156 / N-4) (Bacillus cellulosilyticus).